The primary structure comprises 211 residues: Protein-L-isoaspartate O-methyltransferase (211 aa).

Residue Ser-62 is part of the active site.

The protein belongs to the methyltransferase superfamily. L-isoaspartyl/D-aspartyl protein methyltransferase family.

It localises to the cytoplasm. It catalyses the reaction [protein]-L-isoaspartate + S-adenosyl-L-methionine = [protein]-L-isoaspartate alpha-methyl ester + S-adenosyl-L-homocysteine. In terms of biological role, catalyzes the methyl esterification of L-isoaspartyl residues in peptides and proteins that result from spontaneous decomposition of normal L-aspartyl and L-asparaginyl residues. It plays a role in the repair and/or degradation of damaged proteins. This Shewanella frigidimarina (strain NCIMB 400) protein is Protein-L-isoaspartate O-methyltransferase.